The primary structure comprises 25 residues: Glucomannokinase (25 aa).

The protein belongs to the ROK (NagC/XylR) family. In terms of assembly, homodimer.

It carries out the reaction D-glucose + ATP = D-glucose 6-phosphate + ADP + H(+). The catalysed reaction is D-mannose + ATP = D-mannose 6-phosphate + ADP + H(+). It participates in carbohydrate degradation; glycolysis; D-glyceraldehyde 3-phosphate and glycerone phosphate from D-glucose: step 1/4. Its pathway is carbohydrate metabolism; mannose metabolism. With respect to regulation, competitively inhibited by 2-deoxy-glucose. In terms of biological role, the enzyme has great affinity for glucose and mannose. The polypeptide is Glucomannokinase (Segatella bryantii (Prevotella bryantii)).